Consider the following 1675-residue polypeptide: Clathrin heavy chain 1 (1675 aa).

Alanine 2 is modified (N-acetylalanine). Positions 2–479 (AQILPIRFQE…VDPTLALSVY (478 aa)) are globular terminal domain. WD40-like repeat stretches follow at residues 24 to 67 (NIGF…RPIS), 68 to 107 (ADSA…MTDD), 108 to 149 (VTFW…SSLA), 150 to 195 (GCQI…QPIE), 196 to 257 (GHAA…PEAQ), 258 to 301 (NDFP…ISGE), and 302 to 330 (TIFV…VCVE). The residue at position 67 (serine 67) is a Phosphoserine. Threonine 105 carries the post-translational modification Phosphothreonine. A Phosphotyrosine modification is found at tyrosine 184. Threonine 394 bears the Phosphothreonine mark. The segment at 449-465 (EKWLKEDKLECSEELGD) is binding site for the uncoating ATPase, involved in lattice disassembly. The tract at residues 480–523 (LRANVPNKVIQCFAETGQVQKIVLYAKKVGYTPDWIFLLRNVMR) is flexible linker. The distal segment stretch occupies residues 524-634 (ISPDQGQQFA…RALEHFTDLY (111 aa)). Positions 524–1675 (ISPDQGQQFA…QPQPGFGYSM (1152 aa)) are heavy chain arm. 7 CHCR repeats span residues 537–683 (VQDE…QIWV), 686–828 (ASKY…SEDV), 833–972 (ILVV…PLID), 979–1124 (LSET…VKEA), 1128–1269 (YIKA…FRLA), 1274–1420 (LHIV…LLLN), and 1423–1566 (LMVL…RECF). A Phosphotyrosine modification is found at tyrosine 634. Positions 639–1675 (AVVHTHLLNP…QPQPGFGYSM (1037 aa)) are proximal segment. Residue lysine 737 is modified to N6-succinyllysine. Lysine 856 is subject to N6-acetyllysine. Tyrosine 899 bears the Phosphotyrosine mark. Residue serine 1167 is modified to Phosphoserine. The residue at position 1206 (tyrosine 1206) is a Phosphotyrosine. Residues 1213-1522 (AAKLLYNNVS…YLFKGNNRWK (310 aa)) form an involved in binding clathrin light chain region. Residue serine 1229 is modified to Phosphoserine. Lysine 1441 bears the N6-acetyllysine; alternate mark. Residue lysine 1441 is modified to N6-succinyllysine; alternate. A phosphotyrosine mark is found at tyrosine 1477 and tyrosine 1487. Serine 1494 carries the phosphoserine modification. Lysine 1501 carries the N6-acetyllysine modification. The segment at 1550-1675 (AEELLQWFLQ…QPQPGFGYSM (126 aa)) is trimerization.

It belongs to the clathrin heavy chain family. Clathrin triskelions, composed of 3 heavy chains and 3 light chains, are the basic subunits of the clathrin coat. In the presence of light chains, hub assembly is influenced by both the pH and the concentration of calcium. Interacts with HIP1. Interacts with DENND1A, DENND1B and DENND1C. Interacts with OCRL. Interacts with ERBB2. Interacts with FKBP6. Interacts with CKAP5 and TACC3 forming the TACC3/ch-TOG/clathrin complex located at spindle inter-microtubules bridges; the complex implicates clathrin triskelions; TACC3 and CLTC are proposed to form a composite microtubule interaction surface. Interacts with ATG16L1 (via N-terminus). Interacts with RFTN1; the interaction occurs in response to pathogens. Interacts with USP2 isoform 2. Interacts with TMEM106B (via N-terminus). Interacts with DNAJC6; this interaction produces a local change in heavy-chain contacts, creating a detectable global distortion of the clathrin coat and leads to the recruitment of HSPA8.

It localises to the cytoplasmic vesicle membrane. The protein resides in the membrane. It is found in the coated pit. Its subcellular location is the melanosome. The protein localises to the cytoplasm. It localises to the cytoskeleton. The protein resides in the spindle. Functionally, clathrin is the major protein of the polyhedral coat of coated pits and vesicles. Two different adapter protein complexes link the clathrin lattice either to the plasma membrane or to the trans-Golgi network. Acts as a component of the TACC3/ch-TOG/clathrin complex proposed to contribute to stabilization of kinetochore fibers of the mitotic spindle by acting as inter-microtubule bridge. The TACC3/ch-TOG/clathrin complex is required for the maintenance of kinetochore fiber tension. Plays a role in early autophagosome formation. Interaction with DNAJC6 mediates the recruitment of HSPA8 to the clathrin lattice and creates local destabilization of the lattice promoting uncoating. The polypeptide is Clathrin heavy chain 1 (Rattus norvegicus (Rat)).